A 274-amino-acid polypeptide reads, in one-letter code: Protein A11 homolog (274 aa).

Residues 106 to 136 adopt a coiled-coil conformation; sequence DDNKRVHLLEQEIAELRKKKTKSKNLLDFTN.

Belongs to the poxviridae A11 family. Homomultimer. Interacts with A32. Post-translationally, phosphorylated by a F10-independent mechanism.

Its subcellular location is the host cytoplasm. In terms of biological role, required for viral crescent formation early during virus morphogenesis. In Fowlpox virus (strain NVSL) (FPV), this protein is Protein A11 homolog.